Consider the following 206-residue polypeptide: Large ribosomal subunit protein uL4 (206 aa).

The segment at Ala43–Ser78 is disordered. Over residues Lys49 to His58 the composition is skewed to basic and acidic residues. Residues Thr59 to Gly70 are compositionally biased toward basic residues.

This sequence belongs to the universal ribosomal protein uL4 family. As to quaternary structure, part of the 50S ribosomal subunit.

In terms of biological role, one of the primary rRNA binding proteins, this protein initially binds near the 5'-end of the 23S rRNA. It is important during the early stages of 50S assembly. It makes multiple contacts with different domains of the 23S rRNA in the assembled 50S subunit and ribosome. Its function is as follows. Forms part of the polypeptide exit tunnel. This chain is Large ribosomal subunit protein uL4, found in Janthinobacterium sp. (strain Marseille) (Minibacterium massiliensis).